The sequence spans 382 residues: Serine protease 43 (382 aa).

The first 27 residues, 1–27 (MGGFCGADRGGFLALLVWLQLLQPLFS), serve as a signal peptide directing secretion. The tract at residues 30 to 97 (YKPREDSGVM…SGTTTKITLE (68 aa)) is disordered. 2 stretches are compositionally biased toward polar residues: residues 56-68 (AQQS…SISH) and 85-95 (GSPSGTTTKIT). Positions 119–355 (VDPGSLSAGR…YNEWVSYVLS (237 aa)) constitute a Peptidase S1 domain. Residues cysteine 144 and cysteine 160 are joined by a disulfide bond. Active-site charge relay system residues include histidine 159 and aspartate 205. 3 disulfide bridges follow: cysteine 239–cysteine 313, cysteine 272–cysteine 293, and cysteine 303–cysteine 331. The active-site Charge relay system is serine 307. A helical transmembrane segment spans residues 362-382 (PMGVLVLYLSLVFPLALLVAL).

Belongs to the peptidase S1 family. Testis-specific. Expressed in germ cells at the stages from late pachytene spermatocytes to spermatids.

Its subcellular location is the cell membrane. Plays a role in spermatogenesis. Involved in germ cell survival during meiosis. Lacks protease activity in vitro. The chain is Serine protease 43 from Mus musculus (Mouse).